A 255-amino-acid chain; its full sequence is 3-deoxy-manno-octulosonate cytidylyltransferase (255 aa).

It belongs to the KdsB family.

The protein localises to the cytoplasm. It carries out the reaction 3-deoxy-alpha-D-manno-oct-2-ulosonate + CTP = CMP-3-deoxy-beta-D-manno-octulosonate + diphosphate. It functions in the pathway nucleotide-sugar biosynthesis; CMP-3-deoxy-D-manno-octulosonate biosynthesis; CMP-3-deoxy-D-manno-octulosonate from 3-deoxy-D-manno-octulosonate and CTP: step 1/1. Its pathway is bacterial outer membrane biogenesis; lipopolysaccharide biosynthesis. In terms of biological role, activates KDO (a required 8-carbon sugar) for incorporation into bacterial lipopolysaccharide in Gram-negative bacteria. This is 3-deoxy-manno-octulosonate cytidylyltransferase from Polaromonas sp. (strain JS666 / ATCC BAA-500).